Consider the following 871-residue polypeptide: MILFDKNKRILKKYAKMVSKINQIESDLRSKKNSELIRLSMVLKEKVNSFEDADEHLFEAFALVREAARRTLGMRPFDVQVMGGIALHEGKVAEMKTGEGKTLAATMPIYLNALIGKGVHLVTVNDYLARRDALWMGPVYLFLGLRVGVINSLGKSYEVVWKNPDLARKAIEENWSVWPDGFNGEVLKEESMNKEAVEAFQVELKEITRKEAYLCDVTYGTNNEFGFDYLRDNLVLDYNDKVQRGHFYAIVDEADSVLIDEARTPLIISGPSKESPSVYRRFAQIAKKFVKDKDFTVDEKARTIILTEEGVAKAEKIIGVENLYDPGNVSLLYHLINALKALHLFKKDVDYVVMNGEVIIVDEFTGRLLPGRRYSGGLHQAIEAKEGVPIKEESITYATITFQNYFRMYEKLAGMTGTAKTEESEFVQVYGMEVVVIPTHKPMIRKDHDDLVFRTQKEKYEKIVEEIEKRYKKGQPVLVGTTSIEKSELLSSMLKKKGIPHQVLNAKYHEKEAEIVAKAGQKGMVTIATNMAGRGTDIKLGPGVAELGGLCIIGTERHESRRIDNQLRGRAGRQGDPGESIFFLSLEDDLLRIFGSEQIGKVMNILKIEEGQPIQHPMLSKLIENIQKKVEGINFSIRKTLMEMDDVLDKQRRAVYSLRDQILLEKDYDEYLKDIFEDVVSTRVEEFCSGKNWDIESLKNSLSFFPAGLFDLDEKQFSSSEELHDYLFNRLWEEYQRKKQEIGEDYRKVIRFLMLRIIDDHWRRYLEEVEHVKEAVQLRSYGQKDPIVEFKKETYYMFDEMMRRINDTIANYVLRVVKVSEKDEKEAKEELGKIRLVHEEFNLVNRAMRRATEKKKKKDGLHSFGRIRVKR.

ATP contacts are provided by residues Gln-80, 98 to 102 (GEGKT), and Asp-537.

It belongs to the SecA family. In terms of assembly, monomer and homodimer. Part of the essential Sec protein translocation apparatus which comprises SecA, SecYEG and auxiliary proteins SecDF. Other proteins may also be involved. A single SecA monomer interacts with SecY in the channel.

It localises to the cell inner membrane. It is found in the cytoplasm. It carries out the reaction ATP + H2O + cellular proteinSide 1 = ADP + phosphate + cellular proteinSide 2.. In terms of biological role, part of the Sec protein translocase complex. Interacts with the SecYEG preprotein conducting channel. Has a central role in coupling the hydrolysis of ATP to the transfer of proteins into and across the cell membrane, serving as an ATP-driven molecular motor driving the stepwise translocation of polypeptide chains across the membrane. This chain is Protein translocase subunit SecA, found in Thermotoga maritima (strain ATCC 43589 / DSM 3109 / JCM 10099 / NBRC 100826 / MSB8).